The chain runs to 72 residues: UPF0270 protein YheU (72 aa).

It belongs to the UPF0270 family.

This Shigella dysenteriae serotype 1 (strain Sd197) protein is UPF0270 protein YheU.